The sequence spans 389 residues: S-adenosylmethionine synthase (389 aa).

Histidine 18 contributes to the ATP binding site. Aspartate 20 is a binding site for Mg(2+). Residue glutamate 46 coordinates K(+). Residues glutamate 59 and glutamine 103 each contribute to the L-methionine site. Residues 103–113 are flexible loop; sequence QSADIAMGVDS. ATP contacts are provided by residues 168–170, aspartate 244, 250–251, alanine 267, and lysine 271; these read DSK and RK. An L-methionine-binding site is contributed by aspartate 244. Lysine 275 provides a ligand contact to L-methionine.

The protein belongs to the AdoMet synthase family. As to quaternary structure, homotetramer; dimer of dimers. Mg(2+) is required as a cofactor. It depends on K(+) as a cofactor.

Its subcellular location is the cytoplasm. It carries out the reaction L-methionine + ATP + H2O = S-adenosyl-L-methionine + phosphate + diphosphate. It functions in the pathway amino-acid biosynthesis; S-adenosyl-L-methionine biosynthesis; S-adenosyl-L-methionine from L-methionine: step 1/1. In terms of biological role, catalyzes the formation of S-adenosylmethionine (AdoMet) from methionine and ATP. The overall synthetic reaction is composed of two sequential steps, AdoMet formation and the subsequent tripolyphosphate hydrolysis which occurs prior to release of AdoMet from the enzyme. This is S-adenosylmethionine synthase from Pelagibacter ubique (strain HTCC1062).